The following is a 118-amino-acid chain: UPF0102 protein Cphy_2398 (118 aa).

This sequence belongs to the UPF0102 family.

The polypeptide is UPF0102 protein Cphy_2398 (Lachnoclostridium phytofermentans (strain ATCC 700394 / DSM 18823 / ISDg) (Clostridium phytofermentans)).